Consider the following 47-residue polypeptide: Potamin-1 (47 aa).

3 disulfide bridges follow: C3–C40, C6–C24, and C7–C36.

Functionally, inhibitor of serine proteases chymotrypsin, papain and trypsin. Has strong antifungal activity against C.albicans and R.solani. Has antibacterial activity against the Gram-positive bacterium C.michiganense, but lacks antibacterial activity against the Gram-positive bacterium S.aureus. Lacks hemolytic activity against human erythrocytes. In Solanum tuberosum (Potato), this protein is Potamin-1.